The primary structure comprises 262 residues: Hydroxyethylthiazole kinase (262 aa).

Methionine 43 provides a ligand contact to substrate. Positions 118 and 164 each coordinate ATP. Substrate is bound at residue alanine 191.

It belongs to the Thz kinase family. It depends on Mg(2+) as a cofactor.

It catalyses the reaction 5-(2-hydroxyethyl)-4-methylthiazole + ATP = 4-methyl-5-(2-phosphooxyethyl)-thiazole + ADP + H(+). It participates in cofactor biosynthesis; thiamine diphosphate biosynthesis; 4-methyl-5-(2-phosphoethyl)-thiazole from 5-(2-hydroxyethyl)-4-methylthiazole: step 1/1. Its function is as follows. Catalyzes the phosphorylation of the hydroxyl group of 4-methyl-5-beta-hydroxyethylthiazole (THZ). In Cereibacter sphaeroides (strain ATCC 17023 / DSM 158 / JCM 6121 / CCUG 31486 / LMG 2827 / NBRC 12203 / NCIMB 8253 / ATH 2.4.1.) (Rhodobacter sphaeroides), this protein is Hydroxyethylthiazole kinase.